The primary structure comprises 649 residues: Serine/threonine kinase-like domain-containing protein STKLD1 (649 aa).

Over residues 1 to 13 the composition is skewed to basic and acidic residues; that stretch reads MLGPESDGRRPTQ. Residues 1–23 are disordered; the sequence is MLGPESDGRRPTQGERGPGYPGE. Residues 28-379 form the Protein kinase domain; the sequence is YQVLYQLNPG…CNQAITSAVL (352 aa). Residues 34 to 42 and lysine 57 each bind ATP; that span reads LNPGALGVN. The segment at 621–640 is disordered; it reads FSKPGLPPGGSPQPGCTASG.

It belongs to the protein kinase superfamily. Ser/Thr protein kinase family. STKL subfamily.

The polypeptide is Serine/threonine kinase-like domain-containing protein STKLD1 (STKLD1) (Macaca fascicularis (Crab-eating macaque)).